The primary structure comprises 314 residues: Ribosomal protein L11 methyltransferase (314 aa).

S-adenosyl-L-methionine is bound by residues Thr152, Gly184, Asp206, and Asn248.

This sequence belongs to the methyltransferase superfamily. PrmA family.

Its subcellular location is the cytoplasm. The enzyme catalyses L-lysyl-[protein] + 3 S-adenosyl-L-methionine = N(6),N(6),N(6)-trimethyl-L-lysyl-[protein] + 3 S-adenosyl-L-homocysteine + 3 H(+). In terms of biological role, methylates ribosomal protein L11. This chain is Ribosomal protein L11 methyltransferase, found in Geotalea daltonii (strain DSM 22248 / JCM 15807 / FRC-32) (Geobacter daltonii).